Here is a 605-residue protein sequence, read N- to C-terminus: Isocitrate dehydrogenase kinase/phosphatase (605 aa).

Residues 327–333 and Lys-348 each bind ATP; that span reads APGIKGL. The active site involves Asp-383.

It belongs to the AceK family.

It is found in the cytoplasm. The enzyme catalyses L-seryl-[isocitrate dehydrogenase] + ATP = O-phospho-L-seryl-[isocitrate dehydrogenase] + ADP + H(+). In terms of biological role, bifunctional enzyme which can phosphorylate or dephosphorylate isocitrate dehydrogenase (IDH) on a specific serine residue. This is a regulatory mechanism which enables bacteria to bypass the Krebs cycle via the glyoxylate shunt in response to the source of carbon. When bacteria are grown on glucose, IDH is fully active and unphosphorylated, but when grown on acetate or ethanol, the activity of IDH declines drastically concomitant with its phosphorylation. This is Isocitrate dehydrogenase kinase/phosphatase from Burkholderia orbicola (strain MC0-3).